A 110-amino-acid polypeptide reads, in one-letter code: Ribonuclease H2 subunit C (110 aa).

Residues 45 to 69 are disordered; it reads LKREKSATPSSSDNTTSNTFSNGAI. The span at 51 to 66 shows a compositional bias: low complexity; it reads ATPSSSDNTTSNTFSN.

This sequence belongs to the RNase H2 subunit C family. Highly divergent. In terms of assembly, the RNase 2 complex is a heterotrimer composed of the catalytic subunit RNH201 and of the non-catalytic subunits RNH202 and RNH203.

It is found in the cytoplasm. It localises to the nucleus. Non catalytic subunit of RNase H2, an endonuclease that specifically degrades the RNA of RNA:DNA hybrids. Participates in DNA replication, possibly by mediating the removal of lagging-strand Okazaki fragment RNA primers during DNA replication. Mediates the excision of single ribonucleotides from DNA:RNA duplexes. This is Ribonuclease H2 subunit C (RNH203) from Saccharomyces cerevisiae (strain ATCC 204508 / S288c) (Baker's yeast).